A 327-amino-acid polypeptide reads, in one-letter code: tRNA pseudouridine synthase B (327 aa).

Aspartate 69 functions as the Nucleophile in the catalytic mechanism. Substrate is bound by residues tyrosine 97, tyrosine 201, and leucine 222.

The protein belongs to the pseudouridine synthase TruB family. Type 1 subfamily.

It carries out the reaction uridine(55) in tRNA = pseudouridine(55) in tRNA. In terms of biological role, responsible for synthesis of pseudouridine from uracil-55 in the psi GC loop of transfer RNAs. The chain is tRNA pseudouridine synthase B from Wigglesworthia glossinidia brevipalpis.